Reading from the N-terminus, the 231-residue chain is NADH-ubiquinone oxidoreductase chain 4 (231 aa).

6 consecutive transmembrane segments (helical) span residues 1–21 (PIAG…YGII), 34–54 (VFLP…LTCL), 61–80 (SLIA…AIMI), 84–106 (WGLS…LFCL), 118–138 (ILIL…WWLL), and 169–189 (TIIL…HMFL).

This sequence belongs to the complex I subunit 4 family.

Its subcellular location is the mitochondrion membrane. It carries out the reaction a ubiquinone + NADH + 5 H(+)(in) = a ubiquinol + NAD(+) + 4 H(+)(out). In terms of biological role, core subunit of the mitochondrial membrane respiratory chain NADH dehydrogenase (Complex I) that is believed to belong to the minimal assembly required for catalysis. Complex I functions in the transfer of electrons from NADH to the respiratory chain. The immediate electron acceptor for the enzyme is believed to be ubiquinone. In Porthidium nasutum (Hognosed pitviper), this protein is NADH-ubiquinone oxidoreductase chain 4 (MT-ND4).